A 237-amino-acid polypeptide reads, in one-letter code: UPF0174 protein YaaW (237 aa).

The protein belongs to the UPF0174 family.

This Escherichia coli (strain K12) protein is UPF0174 protein YaaW (yaaW).